The sequence spans 531 residues: Probable calcium-binding mitochondrial carrier F17E5.2 (531 aa).

4 consecutive EF-hand domains span residues 70-105 (EKEK…QAHI), 106-135 (PASV…NYVI), 136-171 (AHEA…MGVN), and 172-207 (LDDQ…YPST). The Ca(2+) site is built by Asp-83, Asp-85, Asp-87, Ser-89, and Asp-94. Positions 149, 151, 153, 155, and 160 each coordinate Ca(2+). 3 Solcar repeats span residues 242-328 (GVWW…IKRW), 338-424 (LSTI…LKSM), and 435-525 (PGVL…VRKQ). The next 6 helical transmembrane spans lie at 248–265 (LVAG…TAPF), 303–322 (GNGI…FMCY), 348–361 (SSAG…IYPM), 399–418 (GYLP…LTVY), 441–458 (LACG…SYPL), and 500–517 (GITP…ISYV).

Belongs to the mitochondrial carrier (TC 2.A.29) family.

It localises to the mitochondrion inner membrane. Its function is as follows. Calcium-dependent mitochondrial solute carrier. The protein is Probable calcium-binding mitochondrial carrier F17E5.2 of Caenorhabditis elegans.